A 117-amino-acid polypeptide reads, in one-letter code: Large ribosomal subunit protein bL20 (117 aa).

It belongs to the bacterial ribosomal protein bL20 family.

In terms of biological role, binds directly to 23S ribosomal RNA and is necessary for the in vitro assembly process of the 50S ribosomal subunit. It is not involved in the protein synthesizing functions of that subunit. The protein is Large ribosomal subunit protein bL20 of Mesomycoplasma hyopneumoniae (strain 7448) (Mycoplasma hyopneumoniae).